Here is a 119-residue protein sequence, read N- to C-terminus: Large ribosomal subunit protein bL20 (119 aa).

Belongs to the bacterial ribosomal protein bL20 family.

Its function is as follows. Binds directly to 23S ribosomal RNA and is necessary for the in vitro assembly process of the 50S ribosomal subunit. It is not involved in the protein synthesizing functions of that subunit. The polypeptide is Large ribosomal subunit protein bL20 (Nitrosospira multiformis (strain ATCC 25196 / NCIMB 11849 / C 71)).